The sequence spans 163 residues: Iron-sulfur cluster assembly protein 2 (163 aa).

The transit peptide at methionine 1–aspartate 48 directs the protein to the mitochondrion.

Belongs to the NifU family. In terms of assembly, component of the core Fe-S cluster (ISC) assembly machinery. Requires [2Fe-2S] cluster as cofactor. Mostly expressed in leaves, pollen and flowers.

The protein resides in the mitochondrion matrix. The protein operates within cofactor biosynthesis; iron-sulfur cluster biosynthesis. In terms of biological role, scaffold protein for the de novo synthesis of iron-sulfur (Fe-S) clusters within mitochondria, which is required for maturation of both mitochondrial and cytoplasmic [2Fe-2S] and [4Fe-4S] proteins. First, a [2Fe-2S] cluster is transiently assembled on the scaffold protein ISCU (ISU1, ISU2 or ISU3). In a second step, the cluster is released from ISCU, transferred to a glutaredoxin, followed by the formation of mitochondrial [2Fe-2S] proteins, the synthesis of [4Fe-4S] clusters and their target-specific insertion into the recipient apoproteins. Cluster assembly on ISCU depends on the function of the cysteine desulfurase complex NFS1-ISD11, which serves as the sulfur donor for cluster synthesis, the iron-binding protein frataxin as the putative iron donor, and the electron transfer chain comprised of ferredoxin reductase and ferredoxin, which receive their electrons from NADH. The sequence is that of Iron-sulfur cluster assembly protein 2 (ISU2) from Arabidopsis thaliana (Mouse-ear cress).